The following is a 617-amino-acid chain: V-type proton ATPase catalytic subunit A (617 aa).

Aspartate 2 is modified (N-acetylalanine). Position 136 is a phosphothreonine (threonine 136). Residue 250–257 (GAFGCGKT) coordinates ATP. Serine 384 carries the post-translational modification Phosphoserine; by AMPK.

It belongs to the ATPase alpha/beta chains family. In terms of assembly, V-ATPase is a heteromultimeric enzyme made up of two complexes: the ATP-hydrolytic V1 complex and the proton translocation V0 complex. The V1 complex consists of three catalytic AB heterodimers that form a heterohexamer, three peripheral stalks each consisting of EG heterodimers, one central rotor including subunits D and F, and the regulatory subunits C and H. The proton translocation complex V0 consists of the proton transport subunit a, a ring of proteolipid subunits c9c'', rotary subunit d, subunits e and f, and the accessory subunits ATP6AP1/Ac45 and ATP6AP2/PRR. Interacts with the V0 complex V-ATPase subunit a4 ATP6V0A4. Interacts with WFS1. Interacts with alpha-crystallin B chain/CRYAB and with MTOR, forming a ternary complex. As to quaternary structure, (Microbial infection) Interacts with Rabies virus protein M; this interaction promotes virion uncoating. Phosphorylation at Ser-384 by AMPK down-regulates its enzyme activity. In terms of tissue distribution, high expression in the skin.

It localises to the cytoplasm. The protein resides in the cytosol. The protein localises to the cytoplasmic vesicle. It is found in the secretory vesicle. Its subcellular location is the clathrin-coated vesicle membrane. It localises to the lysosome. It carries out the reaction ATP + H2O + 4 H(+)(in) = ADP + phosphate + 5 H(+)(out). ATP hydrolysis occurs at the interface between the nucleotide-binding domains of subunits A and B. ATP hydrolysis triggers a conformational change in the subunits D and F, which induces a shift of subunit d. The c-ring is subsequently rotated and results in a continuous proton translocation across the membrane. Catalytic subunit of the V1 complex of vacuolar(H+)-ATPase (V-ATPase), a multisubunit enzyme composed of a peripheral complex (V1) that hydrolyzes ATP and a membrane integral complex (V0) that translocates protons. V-ATPase is responsible for acidifying and maintaining the pH of intracellular compartments and in some cell types, is targeted to the plasma membrane, where it is responsible for acidifying the extracellular environment. In aerobic conditions, involved in intracellular iron homeostasis, thus triggering the activity of Fe(2+) prolyl hydroxylase (PHD) enzymes, and leading to HIF1A hydroxylation and subsequent proteasomal degradation. May play a role in neurite development and synaptic connectivity. Its function is as follows. (Microbial infection) Plays an important role in virion uncoating during Rabies virus replication after membrane fusion. Specifically, participates in the dissociation of incoming viral matrix M proteins uncoating through direct interaction. In Homo sapiens (Human), this protein is V-type proton ATPase catalytic subunit A (ATP6V1A).